A 2003-amino-acid polypeptide reads, in one-letter code: Neurogenic locus notch homolog protein 4 (2003 aa).

Residues 1–23 (MQPPSLLLLLLLLLLLCVSVVRP) form the signal peptide. 4 EGF-like domains span residues 24 to 63 (RGLL…ETCQ), 64 to 115 (FPDP…ERCQ), 118 to 155 (LEDP…EQCQ), and 156 to 192 (LRDF…HACE). Topologically, residues 24–1447 (RGLLCGSFPE…TAPPANQLPW (1424 aa)) are extracellular. Cystine bridges form between Cys28-Cys41, Cys35-Cys51, Cys53-Cys62, Cys68-Cys80, Cys74-Cys103, Cys105-Cys114, Cys122-Cys133, Cys127-Cys143, Cys145-Cys154, Cys160-Cys171, Cys165-Cys180, Cys182-Cys191, Cys198-Cys211, Cys205-Cys220, Cys222-Cys231, Cys238-Cys249, Cys243-Cys262, Cys264-Cys273, Cys280-Cys291, Cys285-Cys300, Cys302-Cys311, Cys318-Cys332, Cys326-Cys341, Cys343-Cys352, Cys359-Cys370, Cys364-Cys379, Cys381-Cys390, Cys396-Cys407, Cys401-Cys418, Cys420-Cys429, Cys436-Cys452, Cys446-Cys461, Cys463-Cys472, Cys479-Cys490, Cys484-Cys499, Cys501-Cys510, Cys517-Cys528, Cys522-Cys537, Cys539-Cys548, Cys555-Cys566, Cys560-Cys575, Cys577-Cys586, Cys593-Cys604, Cys598-Cys613, Cys615-Cys624, Cys629-Cys640, Cys634-Cys649, and Cys651-Cys658. Positions 194–232 (DVNECFQDPGPCPKGTSCHNTLGSFQCLCPVGQEGPRCE) constitute an EGF-like 5; calcium-binding domain. Residues 234–274 (RAGPCPPRGCSNGGTCQLMPEKDSTFHLCLCPPGFIGPDCE) enclose the EGF-like 6 domain. In terms of domain architecture, EGF-like 7; calcium-binding spans 276 to 312 (NPDNCVSHQCQNGGTCQDGLDTYTCLCPETWTGWDCS). The EGF-like 8; calcium-binding domain occupies 314–353 (DVDECETQGPPHCRNGGTCQNSAGSFHCVCVSGWGGTSCE). In terms of domain architecture, EGF-like 9; calcium-binding spans 355–391 (NLDDCIAATCAPGSTCIDRVGSFSCLCPPGRTGLLCH). One can recognise an EGF-like 10 domain in the interval 392-430 (LEDMCLSQPCHGDAQCSTNPLTGSTLCLCQPGYSGPTCH). Residues 432-473 (DLDECLMAQQGPSPCEHGGSCLNTPGSFNCLCPPGYTGSRCE) enclose the EGF-like 11; calcium-binding domain. Residues 475–511 (DHNECLSQPCHPGSTCLDLLATFHCLCPPGLEGQLCE) form the EGF-like 12; calcium-binding domain. Residues 513 to 549 (ETNECASAPCLNHADCHDLLNGFQCICLPGFSGTRCE) enclose the EGF-like 13; calcium-binding domain. Residues 551–587 (DIDECRSSPCANGGQCQDQPGAFHCKCLPGFEGPRCQ) form the EGF-like 14; calcium-binding domain. An EGF-like 15; calcium-binding domain is found at 589–625 (EVDECLSDPCPVGASCLDLPGAFFCLCPSGFTGQLCE). EGF-like domains are found at residues 626–659 (VPLC…PGCA), 661–689 (PEDN…PECE), 691–727 (ELGG…PTCS), 729–765 (EMTA…PQCQ), 767–803 (STDY…PRCE), 806–842 (LRPS…GSCQ), 844–880 (LMDL…PLCN), 882–928 (PLSS…SLCQ), 930–966 (HVNP…QNCS), 968–1004 (ELDA…LRCE), 1006–1044 (DVDE…QWCE), 1046–1085 (EIDP…PTCS), 1087–1126 (RAPS…PDCL), and 1130–1171 (APKG…PRCQ). Asn664 is a glycosylation site (N-linked (GlcNAc...) asparagine). 47 cysteine pairs are disulfide-bonded: Cys665–Cys672, Cys667–Cys677, Cys679–Cys688, Cys695–Cys706, Cys700–Cys715, Cys717–Cys726, Cys733–Cys744, Cys738–Cys753, Cys755–Cys764, Cys771–Cys782, Cys776–Cys791, Cys793–Cys802, Cys810–Cys821, Cys815–Cys830, Cys832–Cys841, Cys848–Cys859, Cys853–Cys868, Cys870–Cys879, Cys886–Cys907, Cys901–Cys916, Cys918–Cys927, Cys934–Cys945, Cys939–Cys954, Cys956–Cys965, Cys972–Cys983, Cys977–Cys992, Cys994–Cys1003, Cys1010–Cys1023, Cys1015–Cys1032, Cys1034–Cys1043, Cys1050–Cys1061, Cys1055–Cys1073, Cys1075–Cys1084, Cys1091–Cys1102, Cys1096–Cys1114, Cys1116–Cys1125, Cys1134–Cys1146, Cys1140–Cys1159, Cys1161–Cys1170, Cys1178–Cys1191, Cys1187–Cys1203, Cys1214–Cys1238, Cys1220–Cys1233, Cys1229–Cys1245, Cys1251–Cys1277, Cys1259–Cys1272, and Cys1268–Cys1284. Asn714 carries N-linked (GlcNAc...) asparagine glycosylation. Asn964 carries N-linked (GlcNAc...) asparagine glycosylation. N-linked (GlcNAc...) asparagine glycosylation is present at Asn1143. LNR repeat units lie at residues 1170–1213 (CQKP…PWKG), 1214–1250 (CPSH…TPPA), and 1251–1294 (CTPA…PEWG). The tract at residues 1347–1371 (AEEKLGGTRDPTYQERAAPQTQPLG) is disordered. Residues 1448 to 1468 (PVLCSPVAGVILLALGALLVL) form a helical membrane-spanning segment. Residues 1469 to 2003 (QLIRRRRREH…PINQGGEGKK (535 aa)) lie on the Cytoplasmic side of the membrane. Residues 1485-1508 (PGFTRRPRTQSAPHRRRPPLGEDS) form a disordered region. Basic residues predominate over residues 1489-1502 (RRPRTQSAPHRRRP). 5 ANK repeats span residues 1633–1665 (TGET…QPDR), 1666–1698 (AGRT…DART), 1700–1732 (DGTT…ARDK), 1733–1765 (WGKT…AQDN), and 1766–1798 (REQT…LRDQ). Disordered regions lie at residues 1900–1927 (LSGV…RPNP) and 1968–2003 (PPPC…EGKK).

The protein belongs to the NOTCH family. As to quaternary structure, heterodimer of a C-terminal fragment N(TM) and a N-terminal fragment N(EC) which are probably linked by disulfide bonds. Interacts with MAML1, MAML2 and MAML3 which act as transcriptional coactivators for NOTCH4. (Microbial infection) Interacts with Epstein-Barr virus (EBV) RK-BARF0. Synthesized in the endoplasmic reticulum as an inactive form which is proteolytically cleaved by a furin-like convertase in the trans-Golgi network before it reaches the plasma membrane to yield an active, ligand-accessible form. Cleavage results in a C-terminal fragment N(TM) and a N-terminal fragment N(EC). Following ligand binding, it is cleaved by TNF-alpha converting enzyme (TACE) to yield a membrane-associated intermediate fragment called notch extracellular truncation (NEXT). This fragment is then cleaved by presenilin dependent gamma-secretase to release a notch-derived peptide containing the intracellular domain (NICD) from the membrane. In terms of processing, phosphorylated. In terms of tissue distribution, highly expressed in the heart, moderately in the lung and placenta and at low levels in the liver, skeletal muscle, kidney, pancreas, spleen, lymph node, thymus, bone marrow and fetal liver. No expression was seen in adult brain or peripheral blood leukocytes.

It localises to the cell membrane. It is found in the nucleus. In terms of biological role, functions as a receptor for membrane-bound ligands Jagged1, Jagged2 and Delta1 to regulate cell-fate determination. Upon ligand activation through the released notch intracellular domain (NICD) it forms a transcriptional activator complex with RBPJ/RBPSUH and activates genes of the enhancer of split locus. Affects the implementation of differentiation, proliferation and apoptotic programs. May regulate branching morphogenesis in the developing vascular system. This chain is Neurogenic locus notch homolog protein 4, found in Homo sapiens (Human).